A 1263-amino-acid polypeptide reads, in one-letter code: TBC1 domain family member 9B (1263 aa).

GRAM domains follow at residues 142 to 209 (LKMR…EKNA) and 288 to 356 (ECYR…EKAD). Thr397 bears the Phosphothreonine mark. The tract at residues 397–449 (TPSKQTGSSIGGTKASVSDPAPESLPTPQEASEPPASPSSPLSSPPSFSTQEI) is disordered. Phosphoserine is present on residues Ser412, Ser433, Ser436, and Ser464. Positions 422–447 (PTPQEASEPPASPSSPLSSPPSFSTQ) are enriched in low complexity. In terms of domain architecture, Rab-GAP TBC spans 509-696 (GIPESLRGEL…VIVDCFFYEG (188 aa)). The chain crosses the membrane as a helical span at residues 669–689 (LSWFLTLFLSVMPFESAVVIV). Residues 880 to 915 (HTPVLAGRMFRLLDQNKDSLINFKEFVTGMSGMYHG) form the EF-hand domain. Disordered regions lie at residues 977–1002 (EQQE…PDYR), 1075–1126 (TTKK…SGDM), and 1139–1159 (VEGG…DDET). The segment covering 987 to 1002 (TPERREEKGTSPPDYR) has biased composition (basic and acidic residues). Ser1254 carries the phosphoserine modification.

It localises to the membrane. Functionally, may act as a GTPase-activating protein for Rab family protein(s). The polypeptide is TBC1 domain family member 9B (Tbc1d9b) (Mus musculus (Mouse)).